We begin with the raw amino-acid sequence, 398 residues long: Galactose-3-O-sulfotransferase 2 (398 aa).

Over 1–11 (MLSALGGLQRC) the chain is Cytoplasmic. Residues 12-29 (FWAILLLALTVSLLAGFL) traverse the membrane as a helical; Signal-anchor for type II membrane protein segment. Residues 30-398 (HKDVRLLMPL…PPKNIPFLGA (369 aa)) lie on the Lumenal side of the membrane. N-linked (GlcNAc...) asparagine glycosylation is found at asparagine 77, asparagine 133, asparagine 180, asparagine 288, asparagine 330, and asparagine 360.

This sequence belongs to the galactose-3-O-sulfotransferase family.

The protein localises to the golgi apparatus. Its subcellular location is the golgi stack membrane. Its pathway is protein modification; carbohydrate sulfation. With respect to regulation, strongly inhibited by Cu(2+) and Zn(2+). Its function is as follows. Transfers a sulfate group to the hydroxyl group at C3 of non-reducing beta-galactosyl residues. Acts both on type 1 (Gal-beta-1,3-GlcNAc) and type 2 (Gal-beta-1,4-GlcNAc) chains with similar efficiency. This Sus scrofa (Pig) protein is Galactose-3-O-sulfotransferase 2 (GAL3ST2).